Here is a 480-residue protein sequence, read N- to C-terminus: Glycogen synthase (480 aa).

Lys15 is a binding site for ADP-alpha-D-glucose.

It belongs to the glycosyltransferase 1 family. Bacterial/plant glycogen synthase subfamily.

The enzyme catalyses [(1-&gt;4)-alpha-D-glucosyl](n) + ADP-alpha-D-glucose = [(1-&gt;4)-alpha-D-glucosyl](n+1) + ADP + H(+). Its pathway is glycan biosynthesis; glycogen biosynthesis. Its function is as follows. Synthesizes alpha-1,4-glucan chains using ADP-glucose. The polypeptide is Glycogen synthase (Rhizobium johnstonii (strain DSM 114642 / LMG 32736 / 3841) (Rhizobium leguminosarum bv. viciae)).